The following is a 458-amino-acid chain: LysM domain-containing protein ARB_05157 (458 aa).

Residues 1 to 19 form the signal peptide; sequence MVSLKVCFLLLASSELAFG. Positions 157–203 constitute a LysM 1 domain; the sequence is AFHLVKQGEDCGTISATYGITSAQFLAWNPSAGKDCTGLWANAYACV. The tract at residues 210–232 is disordered; the sequence is PPKTTSQAPQPTPTKPSNGIETP. Positions 212 to 229 are enriched in polar residues; sequence KTTSQAPQPTPTKPSNGI. LysM domains are found at residues 245 to 291, 325 to 371, and 409 to 455; these read KFHL…YACV, KFYL…YSCV, and KFHF…YLCV.

The protein localises to the secreted. Might have a role in sequestration of chitin oligosaccharides (breakdown products of fungal cell walls that are released during invasion and act as triggers of host immunity) to dampen host defense. The protein is LysM domain-containing protein ARB_05157 of Arthroderma benhamiae (strain ATCC MYA-4681 / CBS 112371) (Trichophyton mentagrophytes).